A 142-amino-acid polypeptide reads, in one-letter code: Cell division protein SepF (142 aa).

Acidic residues predominate over residues 21–31 (ETTTVEEEREE). A disordered region spans residues 21-46 (ETTTVEEEREEQESSHKRQPAISRTN).

It belongs to the SepF family. In terms of assembly, homodimer. Interacts with FtsZ.

Its subcellular location is the cytoplasm. Functionally, cell division protein that is part of the divisome complex and is recruited early to the Z-ring. Probably stimulates Z-ring formation, perhaps through the cross-linking of FtsZ protofilaments. Its function overlaps with FtsA. The chain is Cell division protein SepF from Brevibacillus brevis (strain 47 / JCM 6285 / NBRC 100599).